A 155-amino-acid polypeptide reads, in one-letter code: Endoribonuclease YbeY (155 aa).

Zn(2+) is bound by residues His110, His114, and His120.

It belongs to the endoribonuclease YbeY family. Zn(2+) is required as a cofactor.

Its subcellular location is the cytoplasm. Single strand-specific metallo-endoribonuclease involved in late-stage 70S ribosome quality control and in maturation of the 3' terminus of the 16S rRNA. This is Endoribonuclease YbeY from Deinococcus geothermalis (strain DSM 11300 / CIP 105573 / AG-3a).